Consider the following 721-residue polypeptide: 1,4-alpha-glucan branching enzyme GlgB (721 aa).

Asp-400 (nucleophile) is an active-site residue. Glu-453 acts as the Proton donor in catalysis.

Belongs to the glycosyl hydrolase 13 family. GlgB subfamily. In terms of assembly, monomer.

It carries out the reaction Transfers a segment of a (1-&gt;4)-alpha-D-glucan chain to a primary hydroxy group in a similar glucan chain.. Its pathway is glycan biosynthesis; glycogen biosynthesis. Its function is as follows. Catalyzes the formation of the alpha-1,6-glucosidic linkages in glycogen by scission of a 1,4-alpha-linked oligosaccharide from growing alpha-1,4-glucan chains and the subsequent attachment of the oligosaccharide to the alpha-1,6 position. In Chlamydia abortus (strain DSM 27085 / S26/3) (Chlamydophila abortus), this protein is 1,4-alpha-glucan branching enzyme GlgB.